The following is a 597-amino-acid chain: MNNYFLRKENFFILFCFVFVSIFFVSNVTIIKCNNVENKIDNVGKKIENVGKKIGDMENKNDNVENKNDNVENKNDNVGNKNDNVKNASSDLYKYKLYGDIDEYAYYFLDIDIGKPSQRISLILDTGSSSLSFPCNGCKDCGIHMEKPYNLNYSKTSSILYCNKSNCPYGLKCVGNKCEYLQSYCEGSQIYGFYFSDIVTLPSYNNKKKISFEKLMGCHMHEESLFLHQQATGVLGFSLTKPNGVPTFVDLLFKHTPSLKPIYSICVSEHGGELIIGGYEPDYFLSNQKEKQKMDKSDNNSSNKGNVSIKLKNNDKNDDEENNSKDVIVSNNVEDIVWQAITRKYYYYIKIYGLDLYGTNIMDKKELDMLVDSGSTFTHIPENIYNQINYYLDILCIHDMTNIYEINKRLKLTNESLNKPLVYFEDFKTALKNIIQNENLCIKIVDGVQCWKSLENLPNLYITLSNNYKMIWKPSSYLYKKESFWCKGLEKQVNNKPILGLTFFKNKQVIFDLQQNQIAFIESKCPSNLTSSRPRTFNEYREKENIFLKVSYINLYCLWLLLALTILLSLILYVRKMFYMDYFPLSDQNKSPIQEST.

Residues 1-551 (MNNYFLRKEN…EKENIFLKVS (551 aa)) lie on the Lumenal side of the membrane. The stretch at 33 to 88 (CNNVENKIDNVGKKIENVGKKIGDMENKNDNVENKNDNVENKNDNVGNKNDNVKNA) forms a coiled coil. Residues 58–75 (ENKNDNVENKNDNVENKN) show a composition bias toward basic and acidic residues. The interval 58–83 (ENKNDNVENKNDNVENKNDNVGNKND) is disordered. Residues 107–521 (YFLDIDIGKP…DLQQNQIAFI (415 aa)) form the Peptidase A1 domain. Asp-125 is a catalytic residue. 7 cysteine pairs are disulfide-bonded: Cys-135–Cys-218, Cys-138–Cys-141, Cys-162–Cys-173, Cys-167–Cys-178, Cys-266–Cys-525, Cys-396–Cys-441, and Cys-450–Cys-486. Residues 289–298 (KEKQKMDKSD) show a composition bias toward basic and acidic residues. The interval 289-323 (KEKQKMDKSDNNSSNKGNVSIKLKNNDKNDDEENN) is disordered. Low complexity predominate over residues 299–311 (NNSSNKGNVSIKL). The active site involves Asp-372. The helical transmembrane segment at 552–572 (YINLYCLWLLLALTILLSLIL) threads the bilayer. Topologically, residues 573-597 (YVRKMFYMDYFPLSDQNKSPIQEST) are cytoplasmic.

It belongs to the peptidase A1 family. In terms of assembly, component of a complex composed of SPC25 and PMV; the interaction is mediated via the transmembrane domains. The complex interacts with the SEC61 channel-forming translocon complex and is involved in the recognition and import of PEXEL motif-containing proteins into the ER for subsequent export. It is not clear if the zymogen has a cleavable propeptide. In vitro, appears to be cleaved between Asn-87 and Ala-88. Cleavage of the putative propeptide is dispensable for catalytic activity.

It is found in the endoplasmic reticulum membrane. In terms of biological role, during the asexual blood stage, plays an essential role in the export of several proteins into the host erythrocytes by cleaving the pentameric localization motif RxLxE/Q/D (termed Plasmodium export element (PEXEL)) located downstream of the N-terminal secretory signal sequence. Specifically, cleaves after the leucine residue in the RxLxE/Q/D (or RxLxxE) motif of exported proteins including RESA, EMP2, EMP3, KAHRP, RIF/Rifin and STEVOR. Also, by regulating protein export, plays an essential role in gametocyte development and thus parasite transmission to the mosquito vector. The protein is Plasmepsin V of Plasmodium falciparum (isolate HB3).